A 678-amino-acid polypeptide reads, in one-letter code: DNA ligase (678 aa).

NAD(+) is bound by residues 34–38, 83–84, and Glu114; these read DSEYD and SL. The active-site N6-AMP-lysine intermediate is Lys116. NAD(+) contacts are provided by Arg137, Glu176, Lys293, and Lys317. Zn(2+) is bound by residues Cys411, Cys414, Cys429, and Cys435. The BRCT domain occupies 594-678; it reads PTRQPLNGES…LMAGYGQTLS (85 aa).

It belongs to the NAD-dependent DNA ligase family. LigA subfamily. Mg(2+) serves as cofactor. It depends on Mn(2+) as a cofactor.

It carries out the reaction NAD(+) + (deoxyribonucleotide)n-3'-hydroxyl + 5'-phospho-(deoxyribonucleotide)m = (deoxyribonucleotide)n+m + AMP + beta-nicotinamide D-nucleotide.. Its function is as follows. DNA ligase that catalyzes the formation of phosphodiester linkages between 5'-phosphoryl and 3'-hydroxyl groups in double-stranded DNA using NAD as a coenzyme and as the energy source for the reaction. It is essential for DNA replication and repair of damaged DNA. The polypeptide is DNA ligase (Acinetobacter baumannii (strain AB307-0294)).